The sequence spans 87 residues: U3-theraphotoxin-Hhn1d (87 aa).

The first 24 residues, M1–A24, serve as a signal peptide directing secretion. Positions S25 to R52 are excised as a propeptide. Disulfide bonds link C54–C67, C61–C72, and C66–C79.

Belongs to the neurotoxin 10 (Hwtx-1) family. 51 (Hntx-8) subfamily. Hntx-8 sub-subfamily. Expressed by the venom gland.

The protein localises to the secreted. Functionally, ion channel inhibitor. The protein is U3-theraphotoxin-Hhn1d of Cyriopagopus hainanus (Chinese bird spider).